A 76-amino-acid polypeptide reads, in one-letter code: uncharacterized protein (76 aa).

This is an uncharacterized protein from Treponema pallidum (strain Nichols).